Here is a 1049-residue protein sequence, read N- to C-terminus: Probable ATP-dependent permease (1049 aa).

The N-terminal stretch at 1–25 (MGSHRRYLYYSILSFLLLSCSVVLA) is a signal peptide. The Lumenal portion of the chain corresponds to 26–324 (KQDKTPFFEG…KDPTVSWQGK (299 aa)). Asparagine 50, asparagine 114, asparagine 165, and asparagine 221 each carry an N-linked (GlcNAc...) asparagine glycan. The chain crosses the membrane as a helical span at residues 325-345 (LVLALTAVMVLALFTFATFYI). Residues 346–463 (SKSPLFRNGL…ISMDRKSFSK (118 aa)) lie on the Cytoplasmic side of the membrane. Residues 384–631 (LSFENITYSV…LRNEGYICPD (248 aa)) form the ABC transporter domain. 423–430 (GGSGAGKT) is a binding site for ATP. The helical transmembrane segment at 464 to 481 (IIGFVDQDDFLLPTLTVF) threads the bilayer. Over 482 to 793 (ETVLNSALLR…SFKNMYRNPK (312 aa)) the chain is Lumenal. Residues serine 659 and serine 702 each carry the phosphoserine modification. Positions 793–1044 (KLLLGNYLLT…IMGYLALKWI (252 aa)) constitute an ABC transmembrane type-2 domain. Residues 794 to 814 (LLLGNYLLTILLSLFLGTLYY) form a helical membrane-spanning segment. Over 815–828 (NVSNDISGFQNRMG) the chain is Cytoplasmic. Residues 829-849 (LFFFILTYFGFVTFTGLSSFA) form a helical membrane-spanning segment. At 850-877 (LERIIFIKERSNNYYSPLAYYISKIMSE) the chain is on the lumenal side. The helical transmembrane segment at 878–898 (VVPLRVVPPILLSLIVYPMTG) threads the bilayer. The Cytoplasmic portion of the chain corresponds to 899-909 (LNMKDNAFFKC). Residues 910–930 (IGILILFNLGISLEILTIGII) traverse the membrane as a helical segment. Residues 931 to 937 (FEDLNNS) are Lumenal-facing. Residue asparagine 935 is glycosylated (N-linked (GlcNAc...) asparagine). A helical transmembrane segment spans residues 938-958 (IILSVLVLLGSLLFSGLFINT). At 959–1000 (KNITNVAFKYLKNFSVFYYAYESLLINEVKTLMLKERKYGLN) the chain is on the cytoplasmic side. A helical membrane pass occupies residues 1001–1021 (IEVPGATILSTFGFVVQNLVF). The Lumenal segment spans residues 1022-1024 (DIK). The chain crosses the membrane as a helical span at residues 1025 to 1045 (ILALFNVVFLIMGYLALKWIV). The Cytoplasmic portion of the chain corresponds to 1046–1049 (VEQK).

Belongs to the ABC transporter superfamily. ABCG family. Eye pigment precursor importer (TC 3.A.1.204) subfamily.

The protein resides in the endoplasmic reticulum membrane. This chain is Probable ATP-dependent permease (ADP1), found in Saccharomyces cerevisiae (strain ATCC 204508 / S288c) (Baker's yeast).